A 678-amino-acid polypeptide reads, in one-letter code: MAANVGSMFQYWKRFDLQQLQRELDATATVLANRQDESEQSRKRLIEQSREFKKNTPEDLRKQVAPLLKSFQGEIDALSKRSKEAEAAFLNVYKRLIDVPDPVPALDLGQQLQLKVQRLHDIETENQKLRETLEEYNKEFAEVKNQEVTIKALKEKIREYEQTLKNQAETIALEKEQKLQNDFAEKERKLQETQMSTTSKLEEAEHKVQSLQTALEKTRTELFDLKTKYDEETTAKADEIEMIMTDLERANQRAEVAQREAETLREQLSSANHSLQLASQIQKAPDVEQAIEVLTRSSLEVELAAKEREIAQLVEDVQRLQASLTKLRENSASQISQLEQQLSAKNSTLKQLEEKLKGQADYEEVKKELNILKSMEFAPSEGAGTQDAAKPLEVLLLEKNRSLQSENAALRISNSDLSGRCAELQVRVTEAVATATEQRELIARLEQDLSIIQSIQRPDAEGAAEHRLEKIPEPIKEATALFYGPTAPASGALPEGQVDSLLSIISSQRERFRARNQELEAENRLAQHTLQALQSELDSLRADNIKLFEKIKFLQSYPGRGSGSDDTELRYSSQYEERLDPFSSFSKRERQRKYLSMSPWDKATLSMGRLVLSNKMARTIGFFYTLFLHCLVFLVLYKLAWSESMERDCATFCAKKFADHLHKFHENDNGAAAGDLWQ.

The Cytoplasmic segment spans residues 1–619 (MAANVGSMFQ…LVLSNKMART (619 aa)). Coiled-coil stretches lie at residues 67–450 (LLKS…QDLS) and 502–556 (LSII…FLQS). S586 carries the post-translational modification Phosphoserine. The helical; Anchor for type IV membrane protein transmembrane segment at 620 to 640 (IGFFYTLFLHCLVFLVLYKLA) threads the bilayer. Residues 641–678 (WSESMERDCATFCAKKFADHLHKFHENDNGAAAGDLWQ) lie on the Lumenal side of the membrane.

It belongs to the CASP family. In terms of assembly, homodimer; disulfide-linked. Interacts with GOLGA5.

Its subcellular location is the golgi apparatus membrane. Functionally, may be involved in intra-Golgi retrograde transport. The sequence is that of Protein CASP (CUTL1) from Pongo abelii (Sumatran orangutan).